The sequence spans 478 residues: Probable cytosolic Fe-S cluster assembly factor CPIJ010948 (478 aa).

Cys-23, Cys-69, Cys-72, Cys-75, Cys-189, Cys-245, Cys-396, and Cys-400 together coordinate [4Fe-4S] cluster.

Belongs to the NARF family.

Component of the cytosolic iron-sulfur (Fe/S) protein assembly machinery. Required for maturation of extramitochondrial Fe/S proteins. This chain is Probable cytosolic Fe-S cluster assembly factor CPIJ010948, found in Culex quinquefasciatus (Southern house mosquito).